The primary structure comprises 62 residues: Conotoxin Pn-B0151 (62 aa).

The signal sequence occupies residues 1–22 (MRCLPVFVILLLLIASTPSVDA). A propeptide spanning residues 23 to 48 (LQKTKDDMPLASFHDNVKRILQTLSN) is cleaved from the precursor.

This sequence belongs to the conotoxin T superfamily. Contains 2 disulfide bonds that can be either 'C1-C3, C2-C4' or 'C1-C4, C2-C3', since these disulfide connectivities have been observed for conotoxins with cysteine framework V (for examples, see AC P0DQQ7 and AC P81755). In terms of tissue distribution, expressed by the venom duct.

The protein resides in the secreted. This Conus pennaceus (Feathered cone) protein is Conotoxin Pn-B0151.